Reading from the N-terminus, the 202-residue chain is Transmembrane gamma-carboxyglutamic acid protein 2 (202 aa).

Positions 1-23 (MRGHPSLLLLYMALTTCLDTSPS) are cleaved as a signal peptide. The propeptide occupies 24 to 49 (EETDQEVFLGPPEAQSFLSSHTRIPR). The region spanning 50-96 (ANHWDLELLTPGNLERECLEERCSWEEAREYFEDNTLTERFWESYIY) is the Gla domain. Residues 50 to 109 (ANHWDLELLTPGNLERECLEERCSWEEAREYFEDNTLTERFWESYIYNGKGGRGRVDVAS) lie on the Extracellular side of the membrane. Cys-67 and Cys-72 form a disulfide bridge. Glu-70 is modified (4-carboxyglutamate). The helical transmembrane segment at 110-130 (LAVGLTGGILLIVLAGLGAFW) threads the bilayer. Residues 131 to 202 (YLRWRQHRGQ…PPYTSLRRPH (72 aa)) lie on the Cytoplasmic side of the membrane. The tract at residues 143 to 202 (CPQEAGLISPLSPLNPLGPPTPLPPPPPPPPGLPTYEQALAASGVHDAPPPPYTSLRRPH) is disordered. Positions 158 to 175 (PLGPPTPLPPPPPPPPGL) are enriched in pro residues. The LPXY motif; mediates binding to WW domain-containing proteins motif lies at 175–178 (LPTY). Residues 192-195 (PPPY) carry the PPXY motif; mediates binding to WW domain-containing proteins motif.

As to quaternary structure, interacts with NEDD4. Interacts (via cytoplasmic domain) with transcriptional coactivator YAP1. Gamma-carboxyglutamate residues are formed by vitamin K dependent carboxylation. These residues are essential for the binding of calcium. In terms of tissue distribution, widely expressed with highest levels in kidney. Also highly expressed in the thyroid.

It is found in the cell membrane. In Homo sapiens (Human), this protein is Transmembrane gamma-carboxyglutamic acid protein 2.